Consider the following 427-residue polypeptide: Adenylosuccinate synthetase (427 aa).

GTP contacts are provided by residues 11-17 (GDEGKGK) and 39-41 (GHT). Asp12 (proton acceptor) is an active-site residue. Mg(2+) is bound by residues Asp12 and Gly39. Residues 12–15 (DEGK), 37–40 (NAGH), Thr132, Arg146, Gln223, Thr238, and Arg302 each bind IMP. His40 (proton donor) is an active-site residue. A substrate-binding site is contributed by 298 to 304 (TTTGRPR). GTP is bound by residues Arg304, 330-332 (KLD), and 412-414 (GVG).

It belongs to the adenylosuccinate synthetase family. Homodimer. Mg(2+) is required as a cofactor.

The protein localises to the cytoplasm. It catalyses the reaction IMP + L-aspartate + GTP = N(6)-(1,2-dicarboxyethyl)-AMP + GDP + phosphate + 2 H(+). Its pathway is purine metabolism; AMP biosynthesis via de novo pathway; AMP from IMP: step 1/2. Plays an important role in the de novo pathway and in the salvage pathway of purine nucleotide biosynthesis. Catalyzes the first committed step in the biosynthesis of AMP from IMP. The protein is Adenylosuccinate synthetase (purA) of Dictyostelium discoideum (Social amoeba).